Consider the following 247-residue polypeptide: tRNA pseudouridine synthase A (247 aa).

Catalysis depends on Asp52, which acts as the Nucleophile. Position 113 (Tyr113) interacts with substrate.

Belongs to the tRNA pseudouridine synthase TruA family. In terms of assembly, homodimer.

The enzyme catalyses uridine(38/39/40) in tRNA = pseudouridine(38/39/40) in tRNA. Functionally, formation of pseudouridine at positions 38, 39 and 40 in the anticodon stem and loop of transfer RNAs. In Bartonella quintana (strain Toulouse) (Rochalimaea quintana), this protein is tRNA pseudouridine synthase A.